The sequence spans 298 residues: Zinc import ATP-binding protein ZnuC (298 aa).

Residues 17 to 232 (IELRNAGVYR…PEYVRLFGSR (216 aa)) enclose the ABC transporter domain. 49-56 (GQNGAGKS) serves as a coordination point for ATP. A disordered region spans residues 273–298 (RGHCHVEDGHHHDHEHHHHEGGQPRA). The segment covering 276-298 (CHVEDGHHHDHEHHHHEGGQPRA) has biased composition (basic and acidic residues).

The protein belongs to the ABC transporter superfamily. Zinc importer (TC 3.A.1.15.5) family. As to quaternary structure, the complex is composed of two ATP-binding proteins (ZnuC), two transmembrane proteins (ZnuB) and a solute-binding protein (ZnuA).

It localises to the cell inner membrane. It catalyses the reaction Zn(2+)(out) + ATP(in) + H2O(in) = Zn(2+)(in) + ADP(in) + phosphate(in) + H(+)(in). Functionally, part of the ABC transporter complex ZnuABC involved in zinc import. Responsible for energy coupling to the transport system. The polypeptide is Zinc import ATP-binding protein ZnuC (Brucella melitensis biotype 1 (strain ATCC 23456 / CCUG 17765 / NCTC 10094 / 16M)).